A 166-amino-acid chain; its full sequence is Protein-export protein SecB (166 aa).

The protein belongs to the SecB family. In terms of assembly, homotetramer, a dimer of dimers. One homotetramer interacts with 1 SecA dimer.

Its subcellular location is the cytoplasm. Functionally, one of the proteins required for the normal export of preproteins out of the cell cytoplasm. It is a molecular chaperone that binds to a subset of precursor proteins, maintaining them in a translocation-competent state. It also specifically binds to its receptor SecA. In Cereibacter sphaeroides (strain ATCC 17025 / ATH 2.4.3) (Rhodobacter sphaeroides), this protein is Protein-export protein SecB.